The chain runs to 142 residues: Large ribosomal subunit protein bL17 (142 aa).

The protein belongs to the bacterial ribosomal protein bL17 family. Part of the 50S ribosomal subunit. Contacts protein L32.

The chain is Large ribosomal subunit protein bL17 from Wolbachia pipientis subsp. Culex pipiens (strain wPip).